The primary structure comprises 232 residues: Octanoyltransferase (232 aa).

In terms of domain architecture, BPL/LPL catalytic spans Glu-44–Leu-219. Residues Arg-83–His-90, Ala-150–Gly-152, and Gly-163–Ser-165 each bind substrate. Cys-181 (acyl-thioester intermediate) is an active-site residue.

It belongs to the LipB family.

The protein resides in the cytoplasm. The catalysed reaction is octanoyl-[ACP] + L-lysyl-[protein] = N(6)-octanoyl-L-lysyl-[protein] + holo-[ACP] + H(+). It functions in the pathway protein modification; protein lipoylation via endogenous pathway; protein N(6)-(lipoyl)lysine from octanoyl-[acyl-carrier-protein]: step 1/2. Its function is as follows. Catalyzes the transfer of endogenously produced octanoic acid from octanoyl-acyl-carrier-protein onto the lipoyl domains of lipoate-dependent enzymes. Lipoyl-ACP can also act as a substrate although octanoyl-ACP is likely to be the physiological substrate. This Xanthomonas euvesicatoria pv. vesicatoria (strain 85-10) (Xanthomonas campestris pv. vesicatoria) protein is Octanoyltransferase.